The following is a 703-amino-acid chain: Polyribonucleotide nucleotidyltransferase (703 aa).

Residues aspartate 487 and aspartate 493 each coordinate Mg(2+). Residues 554-613 (PKMETIKIDPDKIRDVIGKGGATIRSICEDTGASIDIDDNGTVRIYAESKLAADEAIYRI) enclose the KH domain. In terms of domain architecture, S1 motif spans 623 to 691 (GKLYRGKVER…ARGRIKLSMK (69 aa)).

It belongs to the polyribonucleotide nucleotidyltransferase family. In terms of assembly, component of the RNA degradosome, which is a multiprotein complex involved in RNA processing and mRNA degradation. Requires Mg(2+) as cofactor.

The protein resides in the cytoplasm. It catalyses the reaction RNA(n+1) + phosphate = RNA(n) + a ribonucleoside 5'-diphosphate. Functionally, involved in mRNA degradation. Catalyzes the phosphorolysis of single-stranded polyribonucleotides processively in the 3'- to 5'-direction. This is Polyribonucleotide nucleotidyltransferase from Hahella chejuensis (strain KCTC 2396).